Consider the following 117-residue polypeptide: Large ribosomal subunit protein bL19 (117 aa).

It belongs to the bacterial ribosomal protein bL19 family.

Its function is as follows. This protein is located at the 30S-50S ribosomal subunit interface and may play a role in the structure and function of the aminoacyl-tRNA binding site. This chain is Large ribosomal subunit protein bL19, found in Christiangramia forsetii (strain DSM 17595 / CGMCC 1.15422 / KT0803) (Gramella forsetii).